We begin with the raw amino-acid sequence, 578 residues long: Proline--tRNA ligase (578 aa).

This sequence belongs to the class-II aminoacyl-tRNA synthetase family. ProS type 1 subfamily. As to quaternary structure, homodimer.

Its subcellular location is the cytoplasm. The catalysed reaction is tRNA(Pro) + L-proline + ATP = L-prolyl-tRNA(Pro) + AMP + diphosphate. Its function is as follows. Catalyzes the attachment of proline to tRNA(Pro) in a two-step reaction: proline is first activated by ATP to form Pro-AMP and then transferred to the acceptor end of tRNA(Pro). As ProRS can inadvertently accommodate and process non-cognate amino acids such as alanine and cysteine, to avoid such errors it has two additional distinct editing activities against alanine. One activity is designated as 'pretransfer' editing and involves the tRNA(Pro)-independent hydrolysis of activated Ala-AMP. The other activity is designated 'posttransfer' editing and involves deacylation of mischarged Ala-tRNA(Pro). The misacylated Cys-tRNA(Pro) is not edited by ProRS. The sequence is that of Proline--tRNA ligase from Burkholderia lata (strain ATCC 17760 / DSM 23089 / LMG 22485 / NCIMB 9086 / R18194 / 383).